A 450-amino-acid chain; its full sequence is Tubulin beta-2 chain (450 aa).

The GTP site is built by Q11, E69, S138, G142, T143, G144, N204, and N226. E69 contributes to the Mg(2+) binding site. The tract at residues 428 to 450 (ATAEDDVDGYAEGEAGETYESEQ) is disordered. Over residues 429–450 (TAEDDVDGYAEGEAGETYESEQ) the composition is skewed to acidic residues.

This sequence belongs to the tubulin family. Dimer of alpha and beta chains. A typical microtubule is a hollow water-filled tube with an outer diameter of 25 nm and an inner diameter of 15 nm. Alpha-beta heterodimers associate head-to-tail to form protofilaments running lengthwise along the microtubule wall with the beta-tubulin subunit facing the microtubule plus end conferring a structural polarity. Microtubules usually have 13 protofilaments but different protofilament numbers can be found in some organisms and specialized cells. The cofactor is Mg(2+). In terms of processing, cleaved by caspase ced-3 in vitro.

It localises to the cytoplasm. The protein localises to the cytoskeleton. Its function is as follows. Tubulin is the major constituent of microtubules, a cylinder consisting of laterally associated linear protofilaments composed of alpha- and beta-tubulin heterodimers. Microtubules grow by the addition of GTP-tubulin dimers to the microtubule end, where a stabilizing cap forms. Below the cap, tubulin dimers are in GDP-bound state, owing to GTPase activity of alpha-tubulin. Required for the normal dynamic behavior of the non-centrosomal microtubules in the epidermal syncytium. Involved in the redistribution of microtubule end-binding protein EB1/ebp-2 caused by wounding. Required to modulate expression in the epidermis of antimicrobial peptides, such as nlp-29, after wounding, or fungal infection. The protein is Tubulin beta-2 chain (tbb-2) of Caenorhabditis elegans.